The chain runs to 117 residues: Ig heavy chain V region 102 (117 aa).

A signal peptide spans 1–19 (MGWSCIILFLVATATGVHS). Residues 20–49 (HVQLQQPGAELVKPGASVKVSCKASGYTFT) are framework-1. C41 and C115 are oxidised to a cystine. Residues 50–54 (SYWMH) form a complementarity-determining-1 region. Positions 55–68 (WVKQRPGQGLEWIG) are framework-2. Residues 69-85 (RIHPSDSDTNYNQKFKG) form a complementarity-determining-2 region. The segment at 86–117 (KATLTVDKSSSTAYMQLSSLTSEDSAVYYCAI) is framework-3.

This Mus musculus (Mouse) protein is Ig heavy chain V region 102.